Reading from the N-terminus, the 596-residue chain is ATP-dependent lipid A-core flippase (596 aa).

Helical transmembrane passes span V34–I54, A80–L100, A138–V158, V164–I184, Q263–V283, and V292–L312. The 284-residue stretch at V38–R321 folds into the ABC transmembrane type-1 domain. The ABC transporter domain occupies I353–I589. G389–T396 serves as a coordination point for ATP.

It belongs to the ABC transporter superfamily. Lipid exporter (TC 3.A.1.106) family. Homodimer.

Its subcellular location is the cell inner membrane. The catalysed reaction is ATP + H2O + lipid A-core oligosaccharideSide 1 = ADP + phosphate + lipid A-core oligosaccharideSide 2.. In terms of biological role, involved in lipopolysaccharide (LPS) biosynthesis. Translocates lipid A-core from the inner to the outer leaflet of the inner membrane. Transmembrane domains (TMD) form a pore in the inner membrane and the ATP-binding domain (NBD) is responsible for energy generation. The chain is ATP-dependent lipid A-core flippase from Burkholderia mallei (strain ATCC 23344).